We begin with the raw amino-acid sequence, 528 residues long: NAC domain-containing protein 13 (528 aa).

The NAC domain occupies 10–160 (LAPGFRFHPT…AYVLYKIYKK (151 aa)). The DNA-binding element occupies 107–166 (VGEKKTLVFHRGRAPNGERTNWVMHEYTLHKEELKRCGGEDVKDAYVLYKIYKKSGSGPK). Positions 388-419 (EAPGTGDSSEFLNPVPSGISTTNEDDPSKDES) are disordered. A helical transmembrane segment spans residues 499–519 (FFCLSIIGALCALFWVIIGTM).

In terms of assembly, interacts with RCD1. As to expression, expressed in roots, rosette leaves, shoot apex, stems and flowers.

It localises to the endoplasmic reticulum membrane. Its subcellular location is the nucleus. In terms of biological role, transcriptional activator activated by proteolytic cleavage through regulated intramembrane proteolysis (RIP). Involved in oxidative stress tolerance by mediating regulation of mitochondrial retrograde signaling during mitochondrial dysfunction. Interacts directly with the mitochondrial dysfunction DNA consensus motif 5'-CTTGNNNNNCA[AC]G-3', a cis-regulatory elements of several mitochondrial retrograde regulation-induced genes, and triggers increased oxidative stress tolerance. In Arabidopsis thaliana (Mouse-ear cress), this protein is NAC domain-containing protein 13.